The chain runs to 476 residues: MKVSLPAFEKAKVLVVGDVMLDRYWTGPTGRISPEAPVPVVKISQIEDRPGGAANVALNVATLGGQVSLAGIVGKDEAADALTTGIQALGVEPKWHCVEGKPTITKLRVMSRNQQLIRLDFEEAYPEDESKALLTLSESALDNVAVVVLSDYAKGAITQPQEFIQKAIAKGVKVLVDPKGSDFSRYRGASLITPNMGEFEEVVGSVSSEAELVEKAQALLSEFDIEAILVTRSEKGMTLITADAPELHIPTVAREVYDVTGAGDTVISALATSLAAGSDLPQACAIANTAAGIVVAKLGTSTVSRIELIRALSVNHGESGFGAVSEDQLAYALEQARLRGERVVMTNGCFDILHAGHVSYLKQARELGDRLIVAVNDDDSVKRLKGEGRPVNQSDRRMAVLAGLASVDWVVPFTEDTPQRIISRLLPDLLVKGGDYKIEDIAGGKEVIAAGGSVKVLGFEDGVSTTSIIENIMANQ.

The ribokinase stretch occupies residues M1 to S319. ATP is bound at residue N195–E198. Residue D264 is part of the active site. Residues M345–Q476 form a cytidylyltransferase region.

In the N-terminal section; belongs to the carbohydrate kinase PfkB family. The protein in the C-terminal section; belongs to the cytidylyltransferase family. In terms of assembly, homodimer.

It carries out the reaction D-glycero-beta-D-manno-heptose 7-phosphate + ATP = D-glycero-beta-D-manno-heptose 1,7-bisphosphate + ADP + H(+). The enzyme catalyses D-glycero-beta-D-manno-heptose 1-phosphate + ATP + H(+) = ADP-D-glycero-beta-D-manno-heptose + diphosphate. The protein operates within nucleotide-sugar biosynthesis; ADP-L-glycero-beta-D-manno-heptose biosynthesis; ADP-L-glycero-beta-D-manno-heptose from D-glycero-beta-D-manno-heptose 7-phosphate: step 1/4. Its pathway is nucleotide-sugar biosynthesis; ADP-L-glycero-beta-D-manno-heptose biosynthesis; ADP-L-glycero-beta-D-manno-heptose from D-glycero-beta-D-manno-heptose 7-phosphate: step 3/4. In terms of biological role, catalyzes the phosphorylation of D-glycero-D-manno-heptose 7-phosphate at the C-1 position to selectively form D-glycero-beta-D-manno-heptose-1,7-bisphosphate. Catalyzes the ADP transfer from ATP to D-glycero-beta-D-manno-heptose 1-phosphate, yielding ADP-D-glycero-beta-D-manno-heptose. In Shewanella sediminis (strain HAW-EB3), this protein is Bifunctional protein HldE.